Consider the following 392-residue polypeptide: Succinate--CoA ligase [ADP-forming] subunit beta (392 aa).

Residues 9 to 248 enclose the ATP-grasp domain; it reads KDILKKFGVS…TNEEDPFEVE (240 aa). ATP is bound by residues Lys50, 57 to 59, Glu103, Met106, and Glu111; that span reads GRG. Mg(2+) contacts are provided by Asn203 and Asp217. Substrate-binding positions include Asn268 and 325 to 327; that span reads GIV.

This sequence belongs to the succinate/malate CoA ligase beta subunit family. As to quaternary structure, heterotetramer of two alpha and two beta subunits. It depends on Mg(2+) as a cofactor.

The enzyme catalyses succinate + ATP + CoA = succinyl-CoA + ADP + phosphate. The catalysed reaction is GTP + succinate + CoA = succinyl-CoA + GDP + phosphate. It functions in the pathway carbohydrate metabolism; tricarboxylic acid cycle; succinate from succinyl-CoA (ligase route): step 1/1. Functionally, succinyl-CoA synthetase functions in the citric acid cycle (TCA), coupling the hydrolysis of succinyl-CoA to the synthesis of either ATP or GTP and thus represents the only step of substrate-level phosphorylation in the TCA. The beta subunit provides nucleotide specificity of the enzyme and binds the substrate succinate, while the binding sites for coenzyme A and phosphate are found in the alpha subunit. In Chlorobium limicola (strain DSM 245 / NBRC 103803 / 6330), this protein is Succinate--CoA ligase [ADP-forming] subunit beta.